Here is a 481-residue protein sequence, read N- to C-terminus: MDQEALLVGRTLLKRGIPTIPFILASQALEKLAYFGLVPNMILFLTVEYGMGTAEAANILFLWSAATNFFPLVGAFIADSYTGRFPLIGFGSSISLTGMVLLWLTTIIRPECDKLTNVCQPTTLLKSVLLYSFFALTAIGAGGVRSSCLAFAADQLQPNQTSRVTTSSLETLFNWYYFSVMVACFLSQSLLVFVQTTYGWQIGFGVSVAAMALSVALFFAASPYYVRFQKPTRNSRNPWKLCRVQQVEDLKSLINVIPIWSTGIILSLVTACQVSFIVLQAKTMDRHTFIQGFEIPPGSYGIFLVISFLLFLGLYDLVIVPLLSWALREPFRLGVMVRMWAGYVISVLCISALAATEYARRKTARDESGTKLSAMWLLPYMILGGIAEALNTIAQNEFFYSELPKTMSSVATTLSSLNMAAASLISSWIITIVDVTTYGSWITENIDEGHLDYYYWLLVGLSLLNVLYFVWCKKSYGKCSI.

The next 12 membrane-spanning stretches (helical) occupy residues leucine 32–glycine 52, alanine 57–isoleucine 77, isoleucine 88–isoleucine 108, leucine 124–valine 144, phenylalanine 173–phenylalanine 193, isoleucine 202–serine 222, isoleucine 259–leucine 279, isoleucine 302–leucine 322, leucine 333–leucine 353, alanine 374–alanine 394, alanine 422–isoleucine 442, and leucine 451–tryptophan 471.

Belongs to the major facilitator superfamily. Proton-dependent oligopeptide transporter (POT/PTR) (TC 2.A.17) family. In terms of tissue distribution, expressed in roots.

It is found in the membrane. In Arabidopsis thaliana (Mouse-ear cress), this protein is Protein NRT1/ PTR FAMILY 1.3 (NPF1.3).